The primary structure comprises 170 residues: Envelope protein 168 (170 aa).

Position 1 (Met1) is a topological domain, intravirion. Residues 2 to 22 (FYPVVQILIGIILVIILILGF) form a helical membrane-spanning segment. The Virion surface portion of the chain corresponds to 23 to 170 (YHLKRKPPKK…TVMGIARNVL (148 aa)).

Belongs to the asfivirus envelope protein p22 family.

It localises to the virion membrane. Its subcellular location is the host cell membrane. In African swine fever virus (isolate Tick/South Africa/Pretoriuskop Pr4/1996) (ASFV), this protein is Envelope protein 168.